A 56-amino-acid chain; its full sequence is Prokaryotic ubiquitin-like protein UBact (56 aa).

The span at 1–28 (MPQDQQRKKQFDPNPNRDDSQRKTPVDK) shows a compositional bias: basic and acidic residues. The tract at residues 1–33 (MPQDQQRKKQFDPNPNRDDSQRKTPVDKEIDDI) is disordered. Deamidated glutamine is present on Q56. Q56 is covalently cross-linked (Isoglutamyl lysine isopeptide (Gln-Lys) (interchain with K-? in acceptor proteins)).

Belongs to the ubiquitin-like protein UBact family. May be modified by deamidation of its C-terminal glutamine to glutamate by the adjacently encoded deamidase. This could be a prerequisite to the subsequent conjugation, as shown in the other prokaryotic ubiquitin-like protein Pup.

Functionally, may function as a protein modifier covalently attached to lysine residues of substrate proteins. This may serve to target the modified proteins for degradation by proteasomes. This chain is Prokaryotic ubiquitin-like protein UBact, found in Yanofskybacteria sp. (strain GW2011_GWA1_39_13).